A 123-amino-acid chain; its full sequence is Small ribosomal subunit protein uS13 (123 aa).

The tract at residues 97-123 (PVRGQKTKTNARTRKGPKKTVGRKKKK) is disordered. Basic residues predominate over residues 101 to 123 (QKTKTNARTRKGPKKTVGRKKKK).

The protein belongs to the universal ribosomal protein uS13 family. As to quaternary structure, part of the 30S ribosomal subunit. Forms a loose heterodimer with protein S19. Forms two bridges to the 50S subunit in the 70S ribosome.

Located at the top of the head of the 30S subunit, it contacts several helices of the 16S rRNA. In the 70S ribosome it contacts the 23S rRNA (bridge B1a) and protein L5 of the 50S subunit (bridge B1b), connecting the 2 subunits; these bridges are implicated in subunit movement. Contacts the tRNAs in the A and P-sites. The sequence is that of Small ribosomal subunit protein uS13 from Alkaliphilus oremlandii (strain OhILAs) (Clostridium oremlandii (strain OhILAs)).